Consider the following 92-residue polypeptide: Small ribosomal subunit protein uS19 (92 aa).

Belongs to the universal ribosomal protein uS19 family.

Protein S19 forms a complex with S13 that binds strongly to the 16S ribosomal RNA. This Hyphomonas neptunium (strain ATCC 15444) protein is Small ribosomal subunit protein uS19.